A 282-amino-acid polypeptide reads, in one-letter code: Probable aquaporin PIP2-6 (282 aa).

2 consecutive transmembrane segments (helical) span residues 39–59 (ALIA…ATVI) and 76–96 (LGIA…TAGI). The short motif at 102–104 (NPA) is the NPA 1 element. The next 3 membrane-spanning stretches (helical) occupy residues 121–141 (VMYI…VKGI), 163–183 (GTAL…VFSA), and 197–217 (VLAP…TIPI). An NPA 2 motif is present at residues 223–225 (NPA). Residues 245–265 (IFWAGPFIGALAAAAYHQYIL) form a helical membrane-spanning segment.

The protein belongs to the MIP/aquaporin (TC 1.A.8) family. PIP (TC 1.A.8.11) subfamily. In terms of tissue distribution, expressed in roots and leaves.

It localises to the cell membrane. Its function is as follows. Aquaporins facilitate the transport of water and small neutral solutes across cell membranes. The chain is Probable aquaporin PIP2-6 (PIP2-6) from Oryza sativa subsp. japonica (Rice).